Reading from the N-terminus, the 469-residue chain is MALQTDTQAWRVGIGTRGLMFSNCVPLHLPEGQYHKLRLPVSAYEALAVARYGLVGSLWEVPAVNSALQCLAAAAPCKDVKIYPSCIFQVHAPMFVTIKTSLRCLNPHDLCLCLICVGAAILDIPLLCAPRDGAGARAAEGQAAAAKGGKLRVWGRLSPSSPTSLSLAFPYAGPPPVAWYRHYIKLTRSEGVGIGKDCAQDHACPVPPQGHASSAADQAGVPERGRKRAHEGPEAGEAASTGRGDVALSQSRALLWRGLGWDTGRGRLAPGLAMSRDAASGSVHLDIQVDRAEEGWVCDVLLEPGPPTAREGCFLSMDPGLVTMKDAWTLFPLHPEHDAVVPPKEEIHVMAQGHLQGGTPSLWGFTFQEAACDQWVLRPRVWTAHSPIKMTVYNCGHKPLHIGPSTRLGLALFWPAERSDNLDAGRIFYQLTSGELYWGRTVARPPTLTLPVDELRPWPKLTPEEPMQH.

The tract at residues 203 to 245 (ACPVPPQGHASSAADQAGVPERGRKRAHEGPEAGEAASTGRGD) is disordered.

This sequence belongs to the epstein-barr virus LF1 family.

This is an uncharacterized protein from Homo sapiens (Human).